The primary structure comprises 147 residues: uncharacterized protein (147 aa).

A helical transmembrane segment spans residues 71-91 (IDILAFVAGTVGVGSLVLLQF).

It localises to the virion. The protein localises to the host membrane. This is an uncharacterized protein from Acanthamoeba polyphaga mimivirus (APMV).